The following is a 172-amino-acid chain: MNRSEKAALISQIKAKADTASFVVVTDFKGISVEELTCLRAKLRESGGEYLVVKNTLARIAFTDGIHSIIKDQFKDNCAIAFGYNEPVAIAKTINDFVKTSKFITVRHGSLEGTLLTTKDIEDLAKLPSKPELIAQTLGTLNAVPTNFVSLFANIIRPLFYALQAIEAKKAA.

Belongs to the universal ribosomal protein uL10 family. As to quaternary structure, part of the ribosomal stalk of the 50S ribosomal subunit. The N-terminus interacts with L11 and the large rRNA to form the base of the stalk. The C-terminus forms an elongated spine to which L12 dimers bind in a sequential fashion forming a multimeric L10(L12)X complex.

Forms part of the ribosomal stalk, playing a central role in the interaction of the ribosome with GTP-bound translation factors. This Lawsonia intracellularis (strain PHE/MN1-00) protein is Large ribosomal subunit protein uL10.